The chain runs to 450 residues: Glutamyl-tRNA reductase (450 aa).

Residues 50–53 (TCNR), Ser109, 114–116 (EPQ), and Gln120 contribute to the substrate site. Residue Cys51 is the Nucleophile of the active site. 189-194 (GAGEMA) lines the NADP(+) pocket. The interval 422–450 (NEPEQPEAHKNRKRPQPDLPAGCPGKTIL) is disordered.

It belongs to the glutamyl-tRNA reductase family. As to quaternary structure, homodimer.

It carries out the reaction (S)-4-amino-5-oxopentanoate + tRNA(Glu) + NADP(+) = L-glutamyl-tRNA(Glu) + NADPH + H(+). It functions in the pathway porphyrin-containing compound metabolism; protoporphyrin-IX biosynthesis; 5-aminolevulinate from L-glutamyl-tRNA(Glu): step 1/2. In terms of biological role, catalyzes the NADPH-dependent reduction of glutamyl-tRNA(Glu) to glutamate 1-semialdehyde (GSA). This chain is Glutamyl-tRNA reductase, found in Oleidesulfovibrio alaskensis (strain ATCC BAA-1058 / DSM 17464 / G20) (Desulfovibrio alaskensis).